A 377-amino-acid polypeptide reads, in one-letter code: DNA primase small subunit PriS (377 aa).

Catalysis depends on residues Asp99, Asp101, and Asp274.

The protein belongs to the eukaryotic-type primase small subunit family. As to quaternary structure, heterodimer of a small subunit (PriS) and a large subunit (PriL). The cofactor is Mg(2+). Requires Mn(2+) as cofactor.

Its function is as follows. Catalytic subunit of DNA primase, an RNA polymerase that catalyzes the synthesis of short RNA molecules used as primers for DNA polymerase during DNA replication. The small subunit contains the primase catalytic core and has DNA synthesis activity on its own. Binding to the large subunit stabilizes and modulates the activity, increasing the rate of DNA synthesis while decreasing the length of the DNA fragments, and conferring RNA synthesis capability. The DNA polymerase activity may enable DNA primase to also catalyze primer extension after primer synthesis. May also play a role in DNA repair. The sequence is that of DNA primase small subunit PriS from Staphylothermus marinus (strain ATCC 43588 / DSM 3639 / JCM 9404 / F1).